The chain runs to 396 residues: Elongation factor Tu 1 (396 aa).

Positions 10–206 (KPHVNVGTIG…ALDSYIPLPE (197 aa)) constitute a tr-type G domain. The segment at 19–26 (GHVDHGKT) is G1. 19–26 (GHVDHGKT) contacts GTP. Position 26 (Thr26) interacts with Mg(2+). The G2 stretch occupies residues 60-64 (GITIN). The tract at residues 81 to 84 (DCPG) is G3. Residues 81–85 (DCPGH) and 136–139 (NKCD) each bind GTP. The G4 stretch occupies residues 136–139 (NKCD). The segment at 174–176 (SAK) is G5.

The protein belongs to the TRAFAC class translation factor GTPase superfamily. Classic translation factor GTPase family. EF-Tu/EF-1A subfamily. In terms of assembly, monomer.

Its subcellular location is the cytoplasm. It carries out the reaction GTP + H2O = GDP + phosphate + H(+). In terms of biological role, GTP hydrolase that promotes the GTP-dependent binding of aminoacyl-tRNA to the A-site of ribosomes during protein biosynthesis. In Albidiferax ferrireducens (strain ATCC BAA-621 / DSM 15236 / T118) (Rhodoferax ferrireducens), this protein is Elongation factor Tu 1.